The chain runs to 135 residues: Classical arabinogalactan protein 4 (135 aa).

The signal sequence occupies residues 1 to 21 (MGSKIVQVFLMLALFATSALA). Gln22 is modified (pyrrolidone carboxylic acid). Positions 22–112 (QAPAPTPTAT…PSDASPAPSA (91 aa)) are disordered. 4-hydroxyproline is present on residues Pro24, Pro26, Pro28, Pro32, Pro33, Pro34, Pro37, Pro38, and Pro39. 9 O-linked (Ara...) hydroxyproline glycosylation sites follow: Pro24, Pro26, Pro28, Pro32, Pro33, Pro34, Pro37, Pro38, and Pro39. Residues 25-76 (APTPTATPPPATPPPVATPPPVATPPPAATPAPATPPPAATPAPATTPPSVA) are compositionally biased toward pro residues. Residues 96 to 112 (SPSSAPGPSDASPAPSA) are compositionally biased toward low complexity. Ser111 carries GPI-anchor amidated serine lipidation. Positions 112 to 135 (AAFSNKAFFAGTAFAAIMYAAVLA) are cleaved as a propeptide — removed in mature form.

The protein belongs to the classical AGP family. In terms of processing, O-glycosylated on hydroxyprolines; noncontiguous hydroxylproline residues are glycosylated with arabinogalactan. In terms of tissue distribution, highly expressed in roots, flowers and leaves.

The protein resides in the cell membrane. Its function is as follows. Proteoglycan that seems to be implicated in diverse developmental roles such as differentiation, cell-cell recognition, embryogenesis and programmed cell death. This is Classical arabinogalactan protein 4 (AGP4) from Arabidopsis thaliana (Mouse-ear cress).